Consider the following 157-residue polypeptide: 6,7-dimethyl-8-ribityllumazine synthase (157 aa).

Residues phenylalanine 26, 60–62 (ALE), and 86–88 (AVI) contribute to the 5-amino-6-(D-ribitylamino)uracil site. 91–92 (ET) contributes to the (2S)-2-hydroxy-3-oxobutyl phosphate binding site. The Proton donor role is filled by histidine 94. Asparagine 119 is a 5-amino-6-(D-ribitylamino)uracil binding site. Arginine 133 serves as a coordination point for (2S)-2-hydroxy-3-oxobutyl phosphate.

This sequence belongs to the DMRL synthase family.

The enzyme catalyses (2S)-2-hydroxy-3-oxobutyl phosphate + 5-amino-6-(D-ribitylamino)uracil = 6,7-dimethyl-8-(1-D-ribityl)lumazine + phosphate + 2 H2O + H(+). It functions in the pathway cofactor biosynthesis; riboflavin biosynthesis; riboflavin from 2-hydroxy-3-oxobutyl phosphate and 5-amino-6-(D-ribitylamino)uracil: step 1/2. Functionally, catalyzes the formation of 6,7-dimethyl-8-ribityllumazine by condensation of 5-amino-6-(D-ribitylamino)uracil with 3,4-dihydroxy-2-butanone 4-phosphate. This is the penultimate step in the biosynthesis of riboflavin. The protein is 6,7-dimethyl-8-ribityllumazine synthase of Laribacter hongkongensis (strain HLHK9).